A 215-amino-acid chain; its full sequence is 2-phospho-L-lactate guanylyltransferase (215 aa).

It belongs to the CofC family. In terms of assembly, homodimer.

It catalyses the reaction (2S)-2-phospholactate + GTP + H(+) = (2S)-lactyl-2-diphospho-5'-guanosine + diphosphate. The protein operates within cofactor biosynthesis; coenzyme F420 biosynthesis. Functionally, guanylyltransferase that catalyzes the activation of (2S)-2-phospholactate (2-PL) as (2S)-lactyl-2-diphospho-5'-guanosine, via the condensation of 2-PL with GTP. It is involved in the biosynthesis of coenzyme F420, a hydride carrier cofactor. This Methanococcoides burtonii (strain DSM 6242 / NBRC 107633 / OCM 468 / ACE-M) protein is 2-phospho-L-lactate guanylyltransferase.